The sequence spans 637 residues: Chaperone protein DnaK (637 aa).

Residue T198 is modified to Phosphothreonine; by autocatalysis. The disordered stretch occupies residues 597–637 (MYAKTSQAGAGPQPGAGPGTGGQGPGKKDEDVVDADFEEVK). A compositionally biased stretch (gly residues) spans 608 to 621 (PQPGAGPGTGGQGP). Over residues 627-637 (DVVDADFEEVK) the composition is skewed to acidic residues.

The protein belongs to the heat shock protein 70 family.

In terms of biological role, acts as a chaperone. This chain is Chaperone protein DnaK, found in Syntrophus aciditrophicus (strain SB).